Reading from the N-terminus, the 140-residue chain is Holo-[acyl-carrier-protein] synthase (140 aa).

The Mg(2+) site is built by Asp-8 and Glu-62.

This sequence belongs to the P-Pant transferase superfamily. AcpS family. Requires Mg(2+) as cofactor.

It is found in the cytoplasm. It catalyses the reaction apo-[ACP] + CoA = holo-[ACP] + adenosine 3',5'-bisphosphate + H(+). In terms of biological role, transfers the 4'-phosphopantetheine moiety from coenzyme A to a Ser of acyl-carrier-protein. In Cupriavidus pinatubonensis (strain JMP 134 / LMG 1197) (Cupriavidus necator (strain JMP 134)), this protein is Holo-[acyl-carrier-protein] synthase.